We begin with the raw amino-acid sequence, 279 residues long: Protein COP1 SUPPRESSOR 2 (279 aa).

Disordered stretches follow at residues 1-29 (MPPK…ISEE) and 57-79 (SSTA…EGEK). Basic and acidic residues predominate over residues 68–79 (KPVEKTETEGEK). The stretch at 86–183 (DTFAQETAVL…EETEAAKKLL (98 aa)) forms a coiled coil. Over residues 217–229 (LRREHPELYKDRG) the composition is skewed to basic and acidic residues. A disordered region spans residues 217–279 (LRREHPELYK…KRERNRVMRR (63 aa)). The span at 250–260 (ADSGKSRQAAT) shows a compositional bias: polar residues. Basic residues predominate over residues 270–279 (KRERNRVMRR).

The protein belongs to the TLS1 family. As to quaternary structure, interacts with COP1.

Its subcellular location is the nucleus. The protein resides in the nucleus speckle. Functionally, inhibits E3 ubiquitin-protein ligase activity of COP1, a central repressor of seedling photomorphogenesis. Represses COP1-mediated turnover of HY5 in the dark. Required for primary root development under normal light growth conditions. This Arabidopsis thaliana (Mouse-ear cress) protein is Protein COP1 SUPPRESSOR 2.